The chain runs to 484 residues: SPI-2 type 3 secretion system translocon protein SctE (484 aa).

The next 2 membrane-spanning stretches (helical) occupy residues 85–105 and 152–172; these read FLQT…LNVF and GIFG…IGAL. Coiled coils occupy residues 107–152 and 413–457; these read NNAQ…RKAG and NTEK…LYKG.

The protein belongs to the SctE/SipB/YopB family. The core secretion machinery of the T3SS is composed of approximately 20 different proteins, including cytoplasmic components, a base, an export apparatus and a needle. This subunit is involved in the formation of a pore, called the translocon, in host membrane. May form a complex with SseB and SseD/SctB2. SseB is required for correct localization of SseC/SctE2 on the bacterial cell surface.

It is found in the secreted. It localises to the cell surface. The protein localises to the host membrane. Functionally, component of the type III secretion system 2 (SPI-2 T3SS), also called injectisome, which is used to inject bacterial effector proteins into eukaryotic host cells. SseC/SctE2 and SseD/SctB2 are inserted into the host membrane where they form a pore and allow the translocation of effector proteins into the cytosol of target cells. Required for the translocation of SPI-2 effector proteins. Required for systemic Salmonella infection of the mouse. Essential for SpvB-induced actin depolymerization in the host cell cytoplasm. This chain is SPI-2 type 3 secretion system translocon protein SctE, found in Salmonella typhimurium (strain LT2 / SGSC1412 / ATCC 700720).